A 171-amino-acid polypeptide reads, in one-letter code: Putative auxin-responsive protein IAA29 (171 aa).

Residues 19–114 enclose the PB1 domain; the sequence is SRFVKVFMHG…TVKKIYIVPA (96 aa). Residues 117–171 are disordered; the sequence is QNENDYQEEEEDNAAAAATADEDGDGAAADDGVAAAADDVDDVAGYTSNDDPSFD. Residues 142-153 are compositionally biased toward low complexity; that stretch reads GAAADDGVAAAA. The span at 162 to 171 shows a compositional bias: polar residues; sequence YTSNDDPSFD.

This sequence belongs to the Aux/IAA family. Homodimers and heterodimers.

Its subcellular location is the nucleus. Functionally, aux/IAA proteins are short-lived transcriptional factors that function as repressors of early auxin response genes at low auxin concentrations. This chain is Putative auxin-responsive protein IAA29 (IAA29), found in Oryza sativa subsp. japonica (Rice).